Consider the following 306-residue polypeptide: Large ribosomal subunit protein mL45 (306 aa).

Residues 287–306 (LKPEEEYEEAQGEAQKPQLA) form a disordered region.

Belongs to the mitochondrion-specific ribosomal protein mL45 family. Component of the mitochondrial large ribosomal subunit (mt-LSU). Mature mammalian 55S mitochondrial ribosomes consist of a small (28S) and a large (39S) subunit. The 28S small subunit contains a 12S ribosomal RNA (12S mt-rRNA) and 30 different proteins. The 39S large subunit contains a 16S rRNA (16S mt-rRNA), a copy of mitochondrial valine transfer RNA (mt-tRNA(Val)), which plays an integral structural role, and 52 different proteins.

The protein resides in the mitochondrion. Its function is as follows. Component of the mitochondrial large ribosomal subunit (mt-LSU). Within the mitochondrial ribosomes, required to direct the nascent polypeptide toward the tunnel exit and position the exit at a distance from the membrane surface. In Homo sapiens (Human), this protein is Large ribosomal subunit protein mL45.